An 84-amino-acid polypeptide reads, in one-letter code: NADH-ubiquinone oxidoreductase chain 4L (84 aa).

A run of 2 helical transmembrane segments spans residues 19–39 (ITLL…LIHI) and 50–70 (IFSL…LSIL).

This sequence belongs to the complex I subunit 4L family.

It is found in the mitochondrion membrane. It catalyses the reaction a ubiquinone + NADH + 5 H(+)(in) = a ubiquinol + NAD(+) + 4 H(+)(out). In terms of biological role, core subunit of the mitochondrial membrane respiratory chain NADH dehydrogenase (Complex I) that is believed to belong to the minimal assembly required for catalysis. Complex I functions in the transfer of electrons from NADH to the respiratory chain. The immediate electron acceptor for the enzyme is believed to be ubiquinone. In Candida albicans (strain SC5314 / ATCC MYA-2876) (Yeast), this protein is NADH-ubiquinone oxidoreductase chain 4L (NAD4L).